Reading from the N-terminus, the 171-residue chain is 3-hydroxydecanoyl-[acyl-carrier-protein] dehydratase (171 aa).

Residue H70 is part of the active site.

This sequence belongs to the thioester dehydratase family. FabA subfamily. As to quaternary structure, homodimer.

The protein resides in the cytoplasm. The catalysed reaction is a (3R)-hydroxyacyl-[ACP] = a (2E)-enoyl-[ACP] + H2O. The enzyme catalyses (3R)-hydroxydecanoyl-[ACP] = (2E)-decenoyl-[ACP] + H2O. It carries out the reaction (2E)-decenoyl-[ACP] = (3Z)-decenoyl-[ACP]. It functions in the pathway lipid metabolism; fatty acid biosynthesis. Necessary for the introduction of cis unsaturation into fatty acids. Catalyzes the dehydration of (3R)-3-hydroxydecanoyl-ACP to E-(2)-decenoyl-ACP and then its isomerization to Z-(3)-decenoyl-ACP. Can catalyze the dehydratase reaction for beta-hydroxyacyl-ACPs with saturated chain lengths up to 16:0, being most active on intermediate chain length. This Xanthomonas axonopodis pv. citri (strain 306) protein is 3-hydroxydecanoyl-[acyl-carrier-protein] dehydratase.